The following is a 635-amino-acid chain: MAQNHMSETMNDISAESPDQPEPPRTGYGVIQAYLKTLDSSPGVYRMLDHESRVLYVGKARNLRARVSNYTRPGHTQRIETMISQTSRMMFLTTRTETEALLLEQNLIKQLKPKYNVLLRDDKSFPYIMVSKNHAFPQLKKHRGARKGKASFFGPFASAGAVNRTLNQLQKAFLLRNCTDTMFENRTRPCLQYQIKRCSGPCVGKISQADYADSVRDAERFLAGRSTKIQEELGAEMQAASEAMEYERAAALRDRIKALTQVQSAQGINPRGVSEADIIGLHLENGLACVQVFFIRANQNWGNQDFYPRVAEDMSAAEVMEAFIGQFYDNKDVPRQLILSDDIENADLMAVALSEKARRKVEIVVPQRGEKTELVASAVRNARESLARRMSESATQAKLLRGIADAFGLEAPPNRIEVYDNSHIQGTNAVGGMIVMGPEGFMKNAYRKFNIKDGEVIAGDDFGMMKAVLNRRFSRLLKEDPDRQKGMWPDLLLIDGGAGQVSAVAEIMEEHGVQDIPMVGVAKGVDRDHGKEEFYRPGENAFALQRNDPVLYFIQRMRDEAHRFAIGTHRAKRAKSLVANPLDDIPGVGARRKKALLTHFGSAKAVSRANLSDLKAVDGVSDALAETIYNYFQVR.

A compositionally biased stretch (polar residues) spans 1-14 (MAQNHMSETMNDIS). The interval 1–27 (MAQNHMSETMNDISAESPDQPEPPRTG) is disordered. One can recognise a GIY-YIG domain in the interval 40–117 (SSPGVYRMLD…IKQLKPKYNV (78 aa)). The region spanning 227–262 (TKIQEELGAEMQAASEAMEYERAAALRDRIKALTQV) is the UVR domain.

Belongs to the UvrC family. In terms of assembly, interacts with UvrB in an incision complex.

The protein resides in the cytoplasm. Its function is as follows. The UvrABC repair system catalyzes the recognition and processing of DNA lesions. UvrC both incises the 5' and 3' sides of the lesion. The N-terminal half is responsible for the 3' incision and the C-terminal half is responsible for the 5' incision. This Ruegeria sp. (strain TM1040) (Silicibacter sp.) protein is UvrABC system protein C.